The chain runs to 242 residues: Small ribosomal subunit protein uS3 (242 aa).

A KH type-2 domain is found at I39–E110. The tract at residues T217 to G242 is disordered. Basic and acidic residues predominate over residues Q233–G242.

The protein belongs to the universal ribosomal protein uS3 family. Part of the 30S ribosomal subunit. Forms a tight complex with proteins S10 and S14.

Binds the lower part of the 30S subunit head. Binds mRNA in the 70S ribosome, positioning it for translation. This is Small ribosomal subunit protein uS3 from Prochlorococcus marinus (strain MIT 9313).